Consider the following 88-residue polypeptide: UPF0213 protein EF_2693 (88 aa).

The 78-residue stretch at 5 to 82 (KSHYFYVLLC…KKLTRKQKEQ (78 aa)) folds into the GIY-YIG domain.

This sequence belongs to the UPF0213 family.

This Enterococcus faecalis (strain ATCC 700802 / V583) protein is UPF0213 protein EF_2693.